Consider the following 199-residue polypeptide: Pre-histone-like nucleoprotein (199 aa).

Ser-2 is modified (N-acetylserine; by host). The propeptide occupies Ser-2–Gly-23. N6-acetyllysine; by host is present on Lys-26. Residues Arg-189–Thr-199 carry the Nuclear localization signal motif.

It belongs to the adenoviridae histone-like nucleoprotein family. As to quaternary structure, interacts with the core-capsid bridging protein; this interaction bridges the virus core to the capsid. Interacts with host NPM1; this interaction might play a role in placing the pre-histone-like nucleoprotein on the viral DNA or regulating viral gene expression. Interacts with host HMGB1; this interaction inhibits host immune response. In terms of processing, cleaved near the N-terminus by the viral protease during virion maturation to form the mature protein.

It is found in the virion. The protein resides in the host nucleus. The protein localises to the host nucleolus. In terms of biological role, plays a role in the inhibition of host immune response within the nucleus. Interacts with cellular nucleosomes and immobilizes the host immune danger signal HMGB1 on chromatin. In turn, prevents HMGB1 release out of the cell and thus decreases inflammation. Also plays a role in the wrapping and condensation of the viral DNA. May also promote viral genome import into the nucleus. This chain is Pre-histone-like nucleoprotein, found in Murine adenovirus A serotype 1 (MAdV-1).